Consider the following 254-residue polypeptide: Phytolongin Phyl1.1 (254 aa).

One can recognise a Longin domain in the interval Cys-12–Glu-113. The disordered stretch occupies residues Glu-138–His-173. Over residues Gly-145–Lys-155 the composition is skewed to polar residues. A helical; Anchor for type IV membrane protein transmembrane segment spans residues Ile-226 to Cys-246.

This sequence belongs to the synaptobrevin family.

Its subcellular location is the membrane. Its function is as follows. Non-SNARE longin protein involved in membrane-trafficking machinery. The chain is Phytolongin Phyl1.1 from Arabidopsis thaliana (Mouse-ear cress).